Reading from the N-terminus, the 206-residue chain is MLTAFTAGLLLITVSELGDKTFFIAMILAMRYPRRWVLVGVVGGLAAMTILSVLMGQIFTFLPTRYINYAEVALFLIFGTKLLWDARRIKATANLEEMEDAEKAIASGEKKLKIVPRGWGIVVESFALTFVAEWGDRTQIATIALAASNNAWGVSAGAILGHTICAVIAVMGGKFVAGRISEKTVTLIGGLLFYLFAVVSWWTKIA.

Helical transmembrane passes span 36–56, 58–78, 114–134, 151–171, and 185–205; these read WVLV…VLMG, IFTF…FLIF, IVPR…VAEW, AWGV…IAVM, and VTLI…WTKI.

The protein belongs to the GDT1 family.

It is found in the cell membrane. The sequence is that of GDT1-like protein sll0615 from Synechocystis sp. (strain ATCC 27184 / PCC 6803 / Kazusa).